We begin with the raw amino-acid sequence, 1530 residues long: Multidrug resistance-associated protein 1 (1530 aa).

Topologically, residues 1-33 are extracellular; it reads MALRDFCSVDGSDLFWEWNVTWNTSNPDFTKCF. N-linked (GlcNAc...) asparagine glycosylation occurs at Asn-19. A helical transmembrane segment spans residues 34–54; it reads QNTVLVWVPCSYLWVCFPFYF. The Cytoplasmic segment spans residues 55–74; sequence LYLSHHDRGYIQMTHLNKAK. Residues 75–95 form a helical membrane-spanning segment; the sequence is TALGFLLWIVCWADLFYSFWE. At 96–100 the chain is on the extracellular side; sequence RSMGK. The chain crosses the membrane as a helical span at residues 101 to 121; the sequence is LLAPVFLVSPTLLGITMLLAT. Over 122–133 the chain is Cytoplasmic; sequence FLIQIERRRGVQ. A helical membrane pass occupies residues 134-154; sequence SSGIMLTFWLIALLCALAILR. Residues 155–172 lie on the Extracellular side of the membrane; that stretch reads SKIMTALKEDARVDVFRD. A helical membrane pass occupies residues 173-193; sequence VTFYIYFSLVLIQLVLSCFSD. The Cytoplasmic segment spans residues 194–316; sequence RSPLFSETIN…KERDPSLFKV (123 aa). At Tyr-277 the chain carries Phosphotyrosine. Ser-289 carries the phosphoserine modification. A helical membrane pass occupies residues 317–337; the sequence is LYKTFGPYFLMSFLFKAVHDL. The ABC transmembrane type-1 1 domain maps to 325 to 608; the sequence is FLMSFLFKAV…LPMVISSIVQ (284 aa). Over 338-363 the chain is Extracellular; sequence MMFAGPEILKLLINFVNDKKAPEWQG. A helical transmembrane segment spans residues 364 to 384; the sequence is YFYTALLFISACLQTLVLHQY. Over 385–440 the chain is Cytoplasmic; sequence FHICFVSGMRIKTAVIGAVYRKALVITNAARKSSTVGEIVNLMSVDAQRFMDLATY. The helical transmembrane segment at 441–461 threads the bilayer; the sequence is INMIWSAPLQVILALYLLWLN. The Extracellular portion of the chain corresponds to 462-464; that stretch reads LGP. Residues 465 to 485 traverse the membrane as a helical segment; sequence SVLAGVAVMVLMVPLNAVMAM. The Cytoplasmic portion of the chain corresponds to 486-547; it reads KTKTYQVAHM…VLKKSAYLAA (62 aa). Position 503 is an N6-succinyllysine (Lys-503). Residues 548–568 traverse the membrane as a helical segment; sequence VGTFTWVCTPFLVALSTFAVY. The Extracellular portion of the chain corresponds to 569–590; sequence VTVDENNILDAQKAFVSLALFN. Residues 591–611 traverse the membrane as a helical segment; the sequence is ILRFPLNILPMVISSIVQASV. At 612–966 the chain is on the cytoplasmic side; that stretch reads SLKRLRVFLS…VKLSVYWDYM (355 aa). The ABC transporter 1 domain occupies 644 to 868; sequence ITVKNATFTW…DGAFAEFLRT (225 aa). 678–685 is a binding site for ATP; sequence GQVGCGKS. The segment at 912-939 is disordered; sequence RQLSSSSSYSRDVSQHHTSTAELRKPGP. A phosphoserine mark is found at Ser-915 and Ser-930. Residues 967-987 traverse the membrane as a helical segment; sequence KAIGLFISFLSIFLFLCNHVA. Positions 974–1255 constitute an ABC transmembrane type-1 2 domain; it reads SFLSIFLFLC…LVRMSSEMET (282 aa). Over 988–1024 the chain is Extracellular; the sequence is SLVSNYWLSLWTDDPIVNGTQEHTQVRLSVYGALGIS. Asn-1005 is a glycosylation site (N-linked (GlcNAc...) asparagine). The chain crosses the membrane as a helical span at residues 1025-1045; that stretch reads QGITVFGYSMAVSIGGIFASR. Over 1046-1088 the chain is Cytoplasmic; that stretch reads RLHLDLLHNVLRSPISFFERTPSGNLVNRFSKELDTVDSMIPQ. The helical transmembrane segment at 1089-1109 threads the bilayer; it reads VIKMFMGSLFNVIGACIIILL. Ala-1110 is a topological domain (extracellular). The chain crosses the membrane as a helical span at residues 1111-1131; sequence TPMAAVIIPPLGLIYFFVQRF. Over 1132 to 1202 the chain is Cytoplasmic; that stretch reads YVASSRQLKR…VANRWLAVRL (71 aa). A helical transmembrane segment spans residues 1203 to 1223; the sequence is ECVGNCIVLFASLFAVISRHS. Over 1224 to 1225 the chain is Extracellular; it reads LS. The chain crosses the membrane as a helical span at residues 1226 to 1246; that stretch reads AGLVGLSVSYSLQVTTYLNWL. At 1247 to 1530 the chain is on the cytoplasmic side; it reads VRMSSEMETN…YSMAKDSGLV (284 aa). Residues 1292 to 1526 enclose the ABC transporter 2 domain; the sequence is VEFRDYGLRY…RGLFYSMAKD (235 aa). ATP is bound at residue 1326–1333; it reads GRTGAGKS.

The protein belongs to the ABC transporter superfamily. ABCC family. Conjugate transporter (TC 3.A.1.208) subfamily. In terms of tissue distribution, expressed in heart, spleen, lung, kidney, skeletal muscle, mammary gland and weaker in brain and liver.

The protein resides in the cell membrane. The protein localises to the basolateral cell membrane. It catalyses the reaction ATP + H2O + xenobioticSide 1 = ADP + phosphate + xenobioticSide 2.. The catalysed reaction is an S-substituted glutathione(in) + ATP + H2O = an S-substituted glutathione(out) + ADP + phosphate + H(+). It carries out the reaction sphing-4-enine 1-phosphate(in) + ATP + H2O = sphing-4-enine 1-phosphate(out) + ADP + phosphate + H(+). The enzyme catalyses leukotriene C4(in) + ATP + H2O = leukotriene C4(out) + ADP + phosphate + H(+). It catalyses the reaction 17beta-estradiol 17-O-(beta-D-glucuronate)(in) + ATP + H2O = 17beta-estradiol 17-O-(beta-D-glucuronate)(out) + ADP + phosphate + H(+). The catalysed reaction is daunorubicin(in) + ATP + H2O = daunorubicin(out) + ADP + phosphate + H(+). It carries out the reaction vincristine(in) + ATP + H2O = vincristine(out) + ADP + phosphate + H(+). The enzyme catalyses 2',3'-cGAMP(in) + ATP + H2O = 2',3'-cGAMP(out) + ADP + phosphate + H(+). It catalyses the reaction S-[(2E,6E,10E)-geranylgeranyl]-L-glutathione(in) + ATP + H2O = S-[(2E,6E,10E)-geranylgeranyl]-L-glutathione(out) + ADP + phosphate + H(+). The catalysed reaction is prostaglandin A2-S-(R)-glutathione(in) + ATP + H2O = prostaglandin A2-S-(R)-glutathione(out) + ADP + phosphate + H(+). It carries out the reaction prostaglandin A2-S-(S)-glutathione(in) + ATP + H2O = prostaglandin A2-S-(S)-glutathione(out) + ADP + phosphate + H(+). With respect to regulation, MK 571 inhibits sphingosine 1-phosphate and leukotriene C4 export. Functionally, mediates export of organic anions and drugs from the cytoplasm. Mediates ATP-dependent transport of glutathione and glutathione conjugates, leukotriene C4, estradiol-17-beta-o-glucuronide, methotrexate, antiviral drugs and other xenobiotics. Confers resistance to anticancer drugs by decreasing accumulation of drug in cells, and by mediating ATP- and GSH-dependent drug export. Hydrolyzes ATP with low efficiency. Catalyzes the export of sphingosine 1-phosphate from mast cells independently of their degranulation. Participates in inflammatory response by allowing export of leukotriene C4 from leukotriene C4-synthesizing cells. Mediates ATP-dependent, GSH-independent cyclic GMP-AMP (cGAMP) export. Thus, by limiting intracellular cGAMP concentrations negatively regulates the cGAS-STING pathway. Exports S-geranylgeranyl-glutathione (GGG) in lymphoid cells and stromal compartments of lymphoid organs. ABCC1 (via extracellular transport) with GGT5 (via GGG catabolism) establish GGG gradients within lymphoid tissues to position P2RY8-positive lymphocytes at germinal centers in lymphoid follicles and restrict their chemotactic transmigration from blood vessels to the bone marrow parenchyma. Mediates basolateral export of GSH-conjugated R- and S-prostaglandin A2 diastereomers in polarized epithelial cells. The chain is Multidrug resistance-associated protein 1 from Bos taurus (Bovine).